The following is a 180-amino-acid chain: Molybdopterin synthase catalytic subunit (180 aa).

Substrate contacts are provided by residues 123–124 (HR), Lys-139, and 146–148 (KLE). The interval 161–180 (RDGQKGVKVEGGKEGVEAKH) is disordered.

The protein belongs to the MoaE family. MOCS2B subfamily. As to quaternary structure, heterotetramer; composed of 2 small (MOCS2A) and 2 large (MOCS2B) subunits.

It localises to the cytoplasm. It carries out the reaction 2 [molybdopterin-synthase sulfur-carrier protein]-C-terminal-Gly-aminoethanethioate + cyclic pyranopterin phosphate + H2O = molybdopterin + 2 [molybdopterin-synthase sulfur-carrier protein]-C-terminal Gly-Gly + 2 H(+). It participates in cofactor biosynthesis; molybdopterin biosynthesis. In terms of biological role, catalytic subunit of the molybdopterin synthase complex, a complex that catalyzes the conversion of precursor Z into molybdopterin. Acts by mediating the incorporation of 2 sulfur atoms from thiocarboxylated MOCS2A into precursor Z to generate a dithiolene group. In Pyrenophora tritici-repentis (strain Pt-1C-BFP) (Wheat tan spot fungus), this protein is Molybdopterin synthase catalytic subunit.